Reading from the N-terminus, the 159-residue chain is MPQPTKGPRLGGGPAHERLMLANLAAALFAHKSIKTTETKAKRLRPYAERLITFAKRGDLHARRRVLAVIGDKTVVHELFTEIAPLLAEREGGYTRITKLGFRKGDNAPMAQIELVLEPVTPKAKPAKSTAKAAPKSKAPVEETPDEPASEETAEAEAD.

The span at 119–138 (PVTPKAKPAKSTAKAAPKSK) shows a compositional bias: low complexity. Positions 119-159 (PVTPKAKPAKSTAKAAPKSKAPVEETPDEPASEETAEAEAD) are disordered. Positions 143 to 159 (ETPDEPASEETAEAEAD) are enriched in acidic residues.

It belongs to the bacterial ribosomal protein bL17 family. As to quaternary structure, part of the 50S ribosomal subunit. Contacts protein L32.

This is Large ribosomal subunit protein bL17 from Leifsonia xyli subsp. xyli (strain CTCB07).